The following is a 793-amino-acid chain: PC3-like endoprotease variant A (793 aa).

An N-terminal signal peptide occupies residues 1–29 (MNYRGIYRRRYVFVLLLLVAVVNISYGWT). The propeptide occupies 30-152 (VLKNKDYKRR…QQKILERVKR (123 aa)). Asn62 and Asn190 each carry an N-linked (GlcNAc...) asparagine glycan. The region spanning 164 to 486 (MWYLLNTGQA…FGRLDANAMV (323 aa)) is the Peptidase S8 domain. Residues Asp202 and His242 each act as charge relay system in the active site. 2 cysteine pairs are disulfide-bonded: Cys259–Cys411 and Cys351–Cys381. Ser419 serves as the catalytic Charge relay system. In terms of domain architecture, P/Homo B spans 495–638 (LPAQRKCTAA…EERVIDTQTK (144 aa)). Residues Cys501 and Cys527 are joined by a disulfide bond.

It belongs to the peptidase S8 family. Furin subfamily. In terms of tissue distribution, predominantly in the body column.

Probably involved in the processing of hormone and other protein precursors at sites comprised of pairs of basic amino acid residues. The protein is PC3-like endoprotease variant A of Hydra vulgaris (Hydra).